A 585-amino-acid chain; its full sequence is Isocitrate dehydrogenase kinase/phosphatase (585 aa).

ATP contacts are provided by residues 315–321 (APGVKGM) and Lys336. Asp371 is an active-site residue.

The protein belongs to the AceK family.

It is found in the cytoplasm. The enzyme catalyses L-seryl-[isocitrate dehydrogenase] + ATP = O-phospho-L-seryl-[isocitrate dehydrogenase] + ADP + H(+). Bifunctional enzyme which can phosphorylate or dephosphorylate isocitrate dehydrogenase (IDH) on a specific serine residue. This is a regulatory mechanism which enables bacteria to bypass the Krebs cycle via the glyoxylate shunt in response to the source of carbon. When bacteria are grown on glucose, IDH is fully active and unphosphorylated, but when grown on acetate or ethanol, the activity of IDH declines drastically concomitant with its phosphorylation. In Photorhabdus laumondii subsp. laumondii (strain DSM 15139 / CIP 105565 / TT01) (Photorhabdus luminescens subsp. laumondii), this protein is Isocitrate dehydrogenase kinase/phosphatase.